We begin with the raw amino-acid sequence, 477 residues long: Glycogen synthase (477 aa).

Lys-15 contributes to the ADP-alpha-D-glucose binding site.

This sequence belongs to the glycosyltransferase 1 family. Bacterial/plant glycogen synthase subfamily.

The enzyme catalyses [(1-&gt;4)-alpha-D-glucosyl](n) + ADP-alpha-D-glucose = [(1-&gt;4)-alpha-D-glucosyl](n+1) + ADP + H(+). It participates in glycan biosynthesis; glycogen biosynthesis. Its function is as follows. Synthesizes alpha-1,4-glucan chains using ADP-glucose. This chain is Glycogen synthase, found in Streptococcus pneumoniae (strain Hungary19A-6).